The following is a 480-amino-acid chain: Dihydrolipoyllysine-residue acetyltransferase component 4 of pyruvate dehydrogenase complex, chloroplastic (480 aa).

The transit peptide at 1-53 (MAVSSSSFLSTASLTNSKSNISFASSVSPSLRSVVFRSTTPATSHRRSMTVRS) directs the protein to the chloroplast. Positions 55-133 (IREIFMPALS…AAIGLLAETE (79 aa)) constitute a Lipoyl-binding domain. Lys-96 carries the post-translational modification N6-lipoyllysine. Disordered regions lie at residues 140 to 168 (KSKA…SPAP) and 224 to 245 (AGIA…PVTA). A compositionally biased stretch (low complexity) spans 142-156 (KAASKSSSSVAEAVV). The 38-residue stretch at 187 to 224 (VATPYAKKLAKQHKVDIESVAGTGPFGRITASDVETAA) folds into the Peripheral subunit-binding (PSBD) domain. The span at 234-243 (APPPPPPPPV) shows a compositional bias: pro residues. His-453 is a catalytic residue.

Belongs to the 2-oxoacid dehydrogenase family. (R)-lipoate serves as cofactor.

Its subcellular location is the plastid. The protein resides in the chloroplast stroma. The enzyme catalyses N(6)-[(R)-dihydrolipoyl]-L-lysyl-[protein] + acetyl-CoA = N(6)-[(R)-S(8)-acetyldihydrolipoyl]-L-lysyl-[protein] + CoA. In terms of biological role, the pyruvate dehydrogenase complex catalyzes the overall conversion of pyruvate to acetyl-CoA and CO(2). It contains multiple copies of three enzymatic components: pyruvate dehydrogenase (E1), dihydrolipoamide acetyltransferase (E2) and lipoamide dehydrogenase (E3). This Arabidopsis thaliana (Mouse-ear cress) protein is Dihydrolipoyllysine-residue acetyltransferase component 4 of pyruvate dehydrogenase complex, chloroplastic (LTA2).